We begin with the raw amino-acid sequence, 372 residues long: Enoyl-[acyl-carrier-protein] reductase, mitochondrial (372 aa).

The transit peptide at Met1–Arg18 directs the protein to the mitochondrion. Tyr72 (proton donor) is an active-site residue. NADP(+) is bound by residues Asn157, Asn183–Val186, Arg206–Arg208, Phe279–Met282, Phe304–Val306, and Lys365.

It belongs to the zinc-containing alcohol dehydrogenase family. Quinone oxidoreductase subfamily. Homodimer.

The protein localises to the mitochondrion matrix. It catalyses the reaction a 2,3-saturated acyl-[ACP] + NADP(+) = a (2E)-enoyl-[ACP] + NADPH + H(+). Catalyzes the NADPH-dependent reduction of trans-2-enoyl thioesters in mitochondrial fatty acid synthesis (fatty acid synthesis type II). Fatty acid chain elongation in mitochondria uses acyl carrier protein (ACP) as an acyl group carrier, but the enzyme accepts both ACP and CoA thioesters as substrates in vitro. Required for respiration and the maintenance of the mitochondrial compartment. The sequence is that of Enoyl-[acyl-carrier-protein] reductase, mitochondrial (etr1) from Schizosaccharomyces pombe (strain 972 / ATCC 24843) (Fission yeast).